Here is a 358-residue protein sequence, read N- to C-terminus: Peptide chain release factor 1 (358 aa).

The residue at position 233 (glutamine 233) is an N5-methylglutamine.

It belongs to the prokaryotic/mitochondrial release factor family. In terms of processing, methylated by PrmC. Methylation increases the termination efficiency of RF1.

The protein localises to the cytoplasm. In terms of biological role, peptide chain release factor 1 directs the termination of translation in response to the peptide chain termination codons UAG and UAA. This Staphylococcus epidermidis (strain ATCC 35984 / DSM 28319 / BCRC 17069 / CCUG 31568 / BM 3577 / RP62A) protein is Peptide chain release factor 1.